The primary structure comprises 298 residues: ATP phosphoribosyltransferase (298 aa).

The protein belongs to the ATP phosphoribosyltransferase family. Long subfamily. The cofactor is Mg(2+).

It localises to the cytoplasm. It catalyses the reaction 1-(5-phospho-beta-D-ribosyl)-ATP + diphosphate = 5-phospho-alpha-D-ribose 1-diphosphate + ATP. It participates in amino-acid biosynthesis; L-histidine biosynthesis; L-histidine from 5-phospho-alpha-D-ribose 1-diphosphate: step 1/9. Its activity is regulated as follows. Feedback inhibited by histidine. In terms of biological role, catalyzes the condensation of ATP and 5-phosphoribose 1-diphosphate to form N'-(5'-phosphoribosyl)-ATP (PR-ATP). Has a crucial role in the pathway because the rate of histidine biosynthesis seems to be controlled primarily by regulation of HisG enzymatic activity. The chain is ATP phosphoribosyltransferase from Aeromonas salmonicida (strain A449).